The following is a 150-amino-acid chain: MQIILLEKVANLGNLGDIVKVKDGYARNFLIPNRKARRATKDAIAEFEVRRAELEKVAAEKLAAAQAVGEKLNGQTFEITQKSGVDGRLFGSVTNGDVAELLKKAGYEIEKAQVRMPEGPLKMIGEHGVQVALHTDVVVDVTVNVIGDHA.

Belongs to the bacterial ribosomal protein bL9 family.

In terms of biological role, binds to the 23S rRNA. In Burkholderia mallei (strain NCTC 10247), this protein is Large ribosomal subunit protein bL9.